Here is a 237-residue protein sequence, read N- to C-terminus: Oligoribonuclease, mitochondrial (237 aa).

The N-terminal 25 residues, 1 to 25 (MLGGSLGSRLLRGVGGSHGRFGARG), are a transit peptide targeting the mitochondrion. Residues 43 to 207 (MVWVDLEMTG…DDISESIKEL (165 aa)) enclose the Exonuclease domain. Positions 47 and 49 each coordinate Mg(2+). Phosphoserine is present on Ser-92. At Tyr-122 the chain carries Phosphotyrosine. Residue Asp-147 coordinates Mg(2+). N6-acetyllysine is present on Lys-173. His-194 is a catalytic residue. Asp-199 contacts Mg(2+).

It belongs to the oligoribonuclease family. In terms of assembly, homodimer. Homotetramer. Requires Mn(2+) as cofactor. The cofactor is Mg(2+). In terms of tissue distribution, highly expressed in the heart and at lower levels in the lymph nodes, brain, lung, liver, spleen and thymus.

It localises to the mitochondrion intermembrane space. It is found in the mitochondrion matrix. Its subcellular location is the mitochondrion. The protein localises to the cytoplasm. The protein resides in the nucleus. Its activity is regulated as follows. Inhibited by adenosine 3',5'-bisphosphate. 3'-to-5'exoribonuclease that preferentially degrades DNA and RNA oligonucleotides composed of only two nucleotides. Binds and degrades longer oligonucleotides with a lower affinity. Plays dual roles in mitochondria, scavenging nanoRNAs (small RNA oligonucleotides of &lt;5 nucleotides) that are produced by the degradosome and clearing short RNAs that are generated by RNA processing. Essential for correct initiation of mitochondrial transcription, degrading mitochondrial RNA dinucleotides to prevent RNA-primed transcription at non-canonical sites in the mitochondrial genome. Essential for embryonic development. In terms of biological role, 3'-to-5'exoribonuclease that preferentially degrades DNA and RNA oligonucleotides composed of only two nucleotides. This is Oligoribonuclease, mitochondrial (REXO2) from Homo sapiens (Human).